The following is a 1024-amino-acid chain: Beta-galactosidase (1024 aa).

Residues N103 and D202 each coordinate substrate. Residue D202 coordinates Na(+). Positions 417, 419, and 462 each coordinate Mg(2+). Substrate is bound by residues E462 and 538–541 (EYAH). E462 serves as the catalytic Proton donor. Catalysis depends on E538, which acts as the Nucleophile. Residue N598 participates in Mg(2+) binding. F602 and N605 together coordinate Na(+). Residues N605 and W1000 each coordinate substrate.

It belongs to the glycosyl hydrolase 2 family. Homotetramer. Mg(2+) serves as cofactor. It depends on Na(+) as a cofactor.

The enzyme catalyses Hydrolysis of terminal non-reducing beta-D-galactose residues in beta-D-galactosides.. The chain is Beta-galactosidase from Escherichia coli O17:K52:H18 (strain UMN026 / ExPEC).